The sequence spans 424 residues: Glutamate-1-semialdehyde 2,1-aminomutase (424 aa).

The residue at position 266 (Lys266) is an N6-(pyridoxal phosphate)lysine.

It belongs to the class-III pyridoxal-phosphate-dependent aminotransferase family. HemL subfamily. As to quaternary structure, homodimer. The cofactor is pyridoxal 5'-phosphate.

The protein resides in the cytoplasm. The enzyme catalyses (S)-4-amino-5-oxopentanoate = 5-aminolevulinate. The protein operates within porphyrin-containing compound metabolism; protoporphyrin-IX biosynthesis; 5-aminolevulinate from L-glutamyl-tRNA(Glu): step 2/2. The sequence is that of Glutamate-1-semialdehyde 2,1-aminomutase from Thermus thermophilus (strain ATCC 27634 / DSM 579 / HB8).